We begin with the raw amino-acid sequence, 344 residues long: Nuclear distribution protein nudE homolog 1 (344 aa).

Residues 1–93 (MEDSGKTFES…MQHSEGYRQI (93 aa)) are self-association. Positions 18-188 (WRDLAMTYKQ…ELAVQQKQDK (171 aa)) form a coiled coil. The tract at residues 88 to 156 (EGYRQISALE…ERNAFLESEL (69 aa)) is interaction with PAFAH1B1. An interaction with CENPF region spans residues 167–290 (QRLKDEARDL…QSPSRTSGPA (124 aa)). The interval 181–246 (AVQQKQDKPR…DSSTSGTPLT (66 aa)) is disordered. At serine 211 the chain carries Phosphoserine. Threonine 215 and threonine 228 each carry phosphothreonine. Serine 239 bears the Phosphoserine mark. Threonine 243 and threonine 246 each carry phosphothreonine. Cysteine 274 carries the S-palmitoyl cysteine; by ZDHHC2, ZDHHC3 and ZDHHC7 lipid modification. Residues 279-289 (YDQSPSRTSGP) are compositionally biased toward polar residues. The tract at residues 279–337 (YDQSPSRTSGPASGRGTKNRDGVDRRPGSTSVGDKGSGKRLEFGKPASEPASPALPSAQ) is disordered. The residue at position 282 (serine 282) is a Phosphoserine. Residues 296-305 (KNRDGVDRRP) show a composition bias toward basic and acidic residues. Residue serine 309 is modified to Phosphoserine. Residues 324 to 336 (PASEPASPALPSA) are compositionally biased toward low complexity.

The protein belongs to the nudE family. Homodimer. Interacts with dynactin and PCM1. Interacts with CENPF, LIS1, CNTRL, dynein, tubulin gamma, PAFAH1B1, PCNT, SLMAP and TCP1. Interacts with ZNF365. Interacts with RAB9A; the interaction leads to RAB9A-dynein motor tethering. Interacts (via C-terminus) with MCRS1 (via C-terminus); phosphorylation of NDE1 inhibits the interaction. Post-translationally, phosphorylated in mitosis. Phosphorylation at Thr-246 is essential for the G2/M transition. In terms of tissue distribution, highly expressed in ovary. Also expressed in brain, heart, kidney, large intestine, liver, lung, small intestine and testis.

It is found in the cytoplasm. The protein localises to the cytoskeleton. It localises to the microtubule organizing center. Its subcellular location is the centrosome. The protein resides in the spindle. It is found in the chromosome. The protein localises to the centromere. It localises to the kinetochore. Its subcellular location is the cleavage furrow. The protein resides in the cytoplasmic vesicle membrane. Its function is as follows. Required for centrosome duplication and formation and function of the mitotic spindle. Essential for the development of the cerebral cortex. May regulate the production of neurons by controlling the orientation of the mitotic spindle during division of cortical neuronal progenitors of the proliferative ventricular zone of the brain. Orientation of the division plane perpendicular to the layers of the cortex gives rise to two proliferative neuronal progenitors whereas parallel orientation of the division plane yields one proliferative neuronal progenitor and a postmitotic neuron. A premature shift towards a neuronal fate within the progenitor population may result in an overall reduction in the final number of neurons and an increase in the number of neurons in the deeper layers of the cortex. Acts as a RAB9A/B effector that tethers RAB9-associated late endosomes to the dynein motor for their retrograde transport to the trans-Golgi network. This Mus musculus (Mouse) protein is Nuclear distribution protein nudE homolog 1.